The sequence spans 293 residues: Membrane protein RL13 (293 aa).

The first 19 residues, 1 to 19 (MHWHLAITWTVIILTFSEC), serve as a signal peptide directing secretion. The helical transmembrane segment at 245 to 265 (IPLGIHAVWAGIVVSVALIAL) threads the bilayer.

The protein resides in the virion membrane. May play a role in modifying tropism or in modulating cell signaling during virus entry. Since RL13 expression severely impairs HCMV replication in epithelial cell cultures, it may act as a regulator promoting persistence by suppressing the switch to fully lytic infection. The protein is Membrane protein RL13 (RL13) of Human cytomegalovirus (strain Merlin) (HHV-5).